Here is a 156-residue protein sequence, read N- to C-terminus: Ecotin (156 aa).

The signal sequence occupies residues 1-19 (MKALLIAAGVAALSSTAMA). Cys65 and Cys102 are disulfide-bonded.

Belongs to the protease inhibitor I11 (ecotin) family. Homodimer.

Its subcellular location is the periplasm. In terms of biological role, general inhibitor of family S1 serine proteases. This chain is Ecotin, found in Pseudomonas aeruginosa (strain UCBPP-PA14).